A 202-amino-acid chain; its full sequence is Acireductone dioxygenase (202 aa).

Fe(2+) contacts are provided by His-110, His-112, Glu-116, and His-154. Residues His-110, His-112, Glu-116, and His-154 each contribute to the Ni(2+) site.

This sequence belongs to the acireductone dioxygenase (ARD) family. In terms of assembly, monomer. The cofactor is Fe(2+). Ni(2+) is required as a cofactor.

It catalyses the reaction 1,2-dihydroxy-5-(methylsulfanyl)pent-1-en-3-one + O2 = 3-(methylsulfanyl)propanoate + CO + formate + 2 H(+). The catalysed reaction is 1,2-dihydroxy-5-(methylsulfanyl)pent-1-en-3-one + O2 = 4-methylsulfanyl-2-oxobutanoate + formate + 2 H(+). It functions in the pathway amino-acid biosynthesis; L-methionine biosynthesis via salvage pathway; L-methionine from S-methyl-5-thio-alpha-D-ribose 1-phosphate: step 5/6. Its function is as follows. Catalyzes 2 different reactions between oxygen and the acireductone 1,2-dihydroxy-3-keto-5-methylthiopentene (DHK-MTPene) depending upon the metal bound in the active site. Fe-containing acireductone dioxygenase (Fe-ARD) produces formate and 2-keto-4-methylthiobutyrate (KMTB), the alpha-ketoacid precursor of methionine in the methionine recycle pathway. Ni-containing acireductone dioxygenase (Ni-ARD) produces methylthiopropionate, carbon monoxide and formate, and does not lie on the methionine recycle pathway. In Synechococcus sp. (strain CC9311), this protein is Acireductone dioxygenase.